Consider the following 371-residue polypeptide: Chorismate synthase (371 aa).

NADP(+)-binding residues include Arg48 and Arg54. FMN is bound by residues 125–127, 238–239, Gly278, 293–297, and Arg319; these read RSS, NA, and KPTSS.

It belongs to the chorismate synthase family. In terms of assembly, homotetramer. FMNH2 serves as cofactor.

It carries out the reaction 5-O-(1-carboxyvinyl)-3-phosphoshikimate = chorismate + phosphate. The protein operates within metabolic intermediate biosynthesis; chorismate biosynthesis; chorismate from D-erythrose 4-phosphate and phosphoenolpyruvate: step 7/7. Functionally, catalyzes the anti-1,4-elimination of the C-3 phosphate and the C-6 proR hydrogen from 5-enolpyruvylshikimate-3-phosphate (EPSP) to yield chorismate, which is the branch point compound that serves as the starting substrate for the three terminal pathways of aromatic amino acid biosynthesis. This reaction introduces a second double bond into the aromatic ring system. This chain is Chorismate synthase, found in Saccharophagus degradans (strain 2-40 / ATCC 43961 / DSM 17024).